Reading from the N-terminus, the 377-residue chain is N5-carboxyaminoimidazole ribonucleotide synthase (377 aa).

ATP-binding positions include Arg93, Lys133, 138–144 (GYDGRGQ), 175–178 (EEFV), Glu183, His206, and 257–258 (NE). An ATP-grasp domain is found at 97 to 287 (KTLLDHAGVR…QFENHLRAVC (191 aa)).

It belongs to the PurK/PurT family. In terms of assembly, homodimer.

It catalyses the reaction 5-amino-1-(5-phospho-beta-D-ribosyl)imidazole + hydrogencarbonate + ATP = 5-carboxyamino-1-(5-phospho-D-ribosyl)imidazole + ADP + phosphate + 2 H(+). Its pathway is purine metabolism; IMP biosynthesis via de novo pathway; 5-amino-1-(5-phospho-D-ribosyl)imidazole-4-carboxylate from 5-amino-1-(5-phospho-D-ribosyl)imidazole (N5-CAIR route): step 1/2. In terms of biological role, catalyzes the ATP-dependent conversion of 5-aminoimidazole ribonucleotide (AIR) and HCO(3)(-) to N5-carboxyaminoimidazole ribonucleotide (N5-CAIR). The protein is N5-carboxyaminoimidazole ribonucleotide synthase of Vibrio vulnificus (strain YJ016).